Reading from the N-terminus, the 461-residue chain is Flavin-containing monooxygenase FMO GS-OX-like 8 (461 aa).

20–25 is a binding site for FAD; that stretch reads GAGPSG. Position 220-225 (220-225) interacts with NADP(+); it reads GCSMSG.

This sequence belongs to the FMO family. As to quaternary structure, interacts with EER5. Requires FAD as cofactor.

Its function is as follows. Catalyzes the conversion of methylthioalkyl glucosinolates of any chain length into methylsulfinylalkyl glucosinolates. This Arabidopsis thaliana (Mouse-ear cress) protein is Flavin-containing monooxygenase FMO GS-OX-like 8.